A 1465-amino-acid chain; its full sequence is DNA polymerase alpha catalytic subunit (1465 aa).

2 disordered regions span residues 20-39 (GSFA…GRQE) and 105-135 (LEDD…PSVT). Over residues 26–35 (RARREKKSKK) the composition is skewed to basic residues. Phosphothreonine is present on T180. Residues S192 and S215 each carry the phosphoserine modification. N6-acetyllysine is present on K230. Residues 261-297 (DESMDTEKVDEKPVTAKTWDQETEPVERVEHEADPER) form a disordered region. Composition is skewed to basic and acidic residues over residues 265–274 (DTEKVDEKPV) and 285–297 (PVER…DPER). The tract at residues 654 to 719 (RINECKVPYW…YHLSELVQQI (66 aa)) is DNA-binding. K974 is subject to N6-succinyllysine. Residues 1249 to 1380 (QFRVHQYHKD…NGPLCPVCMK (132 aa)) are DNA-binding. Zn(2+)-binding residues include C1287, C1290, C1314, C1319, C1352, C1357, C1375, and C1378. Residues 1287–1317 (CPSCGTENIYDNVFEGSGLDMEPSLYRCSNV) form a CysA-type zinc finger. A CysB motif motif is present at residues 1352 to 1378 (CEEPTCCSRLRRLPLHFSRNGPLCPVC).

Belongs to the DNA polymerase type-B family. In terms of assembly, component of the alpha DNA polymerase complex (also known as the alpha DNA polymerase-primase complex) consisting of four subunits: the catalytic subunit POLA1, the regulatory subunit POLA2, and the primase complex subunits PRIM1 and PRIM2 respectively. Within the complex, POLA1 directly interacts with PRIM2. Interacts with PARP1; this interaction functions as part of the control of replication fork progression. Interacts with MCM10 and WDHD1; these interactions recruit the polymerase alpha complex to the pre-replicative complex bound to DNA. Interacts with RPA1; this interaction stabilizes the replicative complex and reduces the misincorporation rate of DNA polymerase alpha by acting as a fidelity clamp. Expressed in those zones containing proliferating cells in the developing embryonic neocortex, as well as in the lateral and medial ganglionic eminences. After birth, expressed in cells that remain proliferating in the ventricular and subventricular zone of the striatum.

The protein resides in the nucleus. Its subcellular location is the cytoplasm. The protein localises to the cytosol. The enzyme catalyses DNA(n) + a 2'-deoxyribonucleoside 5'-triphosphate = DNA(n+1) + diphosphate. Catalytic subunit of the DNA polymerase alpha complex (also known as the alpha DNA polymerase-primase complex) which plays an essential role in the initiation of DNA synthesis. During the S phase of the cell cycle, the DNA polymerase alpha complex (composed of a catalytic subunit POLA1, a regulatory subunit POLA2 and two primase subunits PRIM1 and PRIM2) is recruited to DNA at the replicative forks via direct interactions with MCM10 and WDHD1. The primase subunit of the polymerase alpha complex initiates DNA synthesis by oligomerising short RNA primers on both leading and lagging strands. These primers are initially extended by the polymerase alpha catalytic subunit and subsequently transferred to polymerase delta and polymerase epsilon for processive synthesis on the lagging and leading strand, respectively. The reason this transfer occurs is because the polymerase alpha has limited processivity and lacks intrinsic 3' exonuclease activity for proofreading error, and therefore is not well suited for replicating long complexes. In the cytosol, responsible for a substantial proportion of the physiological concentration of cytosolic RNA:DNA hybrids, which are necessary to prevent spontaneous activation of type I interferon responses. The chain is DNA polymerase alpha catalytic subunit (Pola1) from Mus musculus (Mouse).